The chain runs to 217 residues: Non-structural protein NS3 (217 aa).

This sequence belongs to the orbivirus NS3 family.

Functionally, may play a role in the release of virions from infected cells. The protein is Non-structural protein NS3 (Segment-10) of African horse sickness virus 6 (AHSV-6).